Reading from the N-terminus, the 59-residue chain is Gonadotropin-releasing hormone receptor (59 aa).

Residues 1–2 (VA) lie on the Cytoplasmic side of the membrane. Residues 3 to 23 (FATSFTVCWTPYYVLGIWYWF) form a helical membrane-spanning segment. Topologically, residues 24-37 (DPEMLNRVSDPVNH) are extracellular. A helical transmembrane segment spans residues 38–58 (FFFLFAFLNPCFDPLIYGYFS). A topological domain (cytoplasmic) is located at residue Leu59.

This sequence belongs to the G-protein coupled receptor 1 family.

It is found in the cell membrane. Functionally, receptor for gonadotropin releasing hormone (GnRH) that mediates the action of GnRH to stimulate the secretion of the gonadotropic hormones luteinizing hormone (LH) and follicle-stimulating hormone (FSH). This receptor mediates its action by association with G-proteins that activate a phosphatidylinositol-calcium second messenger system. The sequence is that of Gonadotropin-releasing hormone receptor (GNRHR) from Macaca mulatta (Rhesus macaque).